The following is a 334-amino-acid chain: CRISPR-associated endonuclease Cas1 (334 aa).

Mn(2+) contacts are provided by Glu161, His226, and Glu241.

This sequence belongs to the CRISPR-associated endonuclease Cas1 family. In terms of assembly, homodimer, forms a heterotetramer with a Cas2 homodimer. It depends on Mg(2+) as a cofactor. Requires Mn(2+) as cofactor.

Functionally, CRISPR (clustered regularly interspaced short palindromic repeat), is an adaptive immune system that provides protection against mobile genetic elements (viruses, transposable elements and conjugative plasmids). CRISPR clusters contain spacers, sequences complementary to antecedent mobile elements, and target invading nucleic acids. CRISPR clusters are transcribed and processed into CRISPR RNA (crRNA). Acts as a dsDNA endonuclease. Involved in the integration of spacer DNA into the CRISPR cassette. The sequence is that of CRISPR-associated endonuclease Cas1 from Methanothermobacter thermautotrophicus (strain ATCC 29096 / DSM 1053 / JCM 10044 / NBRC 100330 / Delta H) (Methanobacterium thermoautotrophicum).